The following is a 198-amino-acid chain: Ribonuclease HII (198 aa).

The region spanning 6 to 195 (RRVAGVDEVG…VHHMLYQDKN (190 aa)) is the RNase H type-2 domain. Aspartate 12, glutamate 13, and aspartate 103 together coordinate a divalent metal cation.

The protein belongs to the RNase HII family. Mn(2+) is required as a cofactor. The cofactor is Mg(2+).

The protein localises to the cytoplasm. It carries out the reaction Endonucleolytic cleavage to 5'-phosphomonoester.. Endonuclease that specifically degrades the RNA of RNA-DNA hybrids. This Roseobacter denitrificans (strain ATCC 33942 / OCh 114) (Erythrobacter sp. (strain OCh 114)) protein is Ribonuclease HII.